The sequence spans 275 residues: uncharacterized protein (275 aa).

Residues 1–162 (NLFSVIVSLI…ITSYWTEVQR (162 aa)) form the ABC transmembrane type-1 domain. The next 3 helical transmembrane spans lie at 21–41 (LYLVCTLPILIIVILPIGNIM), 106–126 (IMNLILFINIFGILFLGYYLM), and 137–157 (FAYVLYLFQIINPIVSITSYW).

Its subcellular location is the cell membrane. This is an uncharacterized protein from Staphylococcus epidermidis.